The following is a 405-amino-acid chain: Alpha-1-antiproteinase S (405 aa).

A signal peptide spans Met1 to Ala24. N-linked (GlcNAc...) asparagine glycans are attached at residues Asn57, Asn94, Asn157, and Asn258. The segment at Gly360–Lys379 is RCL.

The protein belongs to the serpin family.

The protein resides in the secreted. Functionally, inhibits elastase, chymotrypsin, cathepsin G, plasmin, and trypsin. The polypeptide is Alpha-1-antiproteinase S (Cavia porcellus (Guinea pig)).